Consider the following 75-residue polypeptide: Small ribosomal subunit protein bS16 (75 aa).

Belongs to the bacterial ribosomal protein bS16 family.

The protein is Small ribosomal subunit protein bS16 of Campylobacter fetus subsp. fetus (strain 82-40).